A 180-amino-acid chain; its full sequence is CD-NTase/cGAS isopeptidase (180 aa).

Positions 33–165 constitute an MPN domain; that stretch reads IVISSSTIEQ…AGSYSLSASV (133 aa). Glu54 acts as the Proton donor/acceptor in catalysis. His115, His117, and Asp128 together coordinate Zn(2+).

The protein belongs to the peptidase M67B family. Cap3 isopeptidase subfamily.

Its function is as follows. Metalloprotease priming reversal component of a CBASS antivirus system. CBASS (cyclic oligonucleotide-based antiphage signaling system) provides immunity against bacteriophages. The CD-NTase protein (CdnD) synthesizes cyclic nucleotides in response to infection; these serve as specific second messenger signals. The signals activate a diverse range of effectors, leading to bacterial cell death and thus abortive phage infection. A type II-C(AAG) CBASS system. In terms of biological role, reverses the primed state of DncV, the CD-NTase. Cleaves a CdnD-GFP (green fluorescent protein) fusion protein precisely at the C-terminus of CdnD. Overexpression decreases the efficacy of CBASS protection against phage T2. Antagonism of phage defense upon overexpression is CBASS-system specific, Cap3 from this bacteria only antagonizes its cognate CBASS system and not that of C.freundii, E.coli or V.cholerae. Functionally, protects E.coli against phage T2 infection. When the cdnD-cap2-cap3-cap4 operon is introduced in E.coli there is a more than 10(3) decrease in the efficiency of T2 plaque formation. The operon does not protect against phage T5 and only about 10-fold against T7. The chain is CD-NTase/cGAS isopeptidase from Enterobacter hormaechei subsp. hoffmannii (strain UCI 50).